Here is a 24-residue protein sequence, read N- to C-terminus: Grammistin Gs G (24 aa).

Belongs to the grammistin family. Group 1 subfamily. Exists as aggregates of 3-4 molecules. As to expression, expressed by the skin glands.

The protein localises to the secreted. Thanks to its abundant amphiphilic alpha-helices, it may integrate into membrane phospholipids, leading to lysis of the membrane. Its high hemolytic activity is inhibited by phospholipids, but not by cholesterol. Has antibacterial activity with a broad spectrum against various species of bacteria including both Gram-positive and Gram-negative groups. Also has high ichthyotoxic activity. In Grammistes sexlineatus (Goldenstriped soapfish), this protein is Grammistin Gs G.